The sequence spans 863 residues: Potassium/sodium hyperpolarization-activated cyclic nucleotide-gated channel 2 (863 aa).

Over residues 1-10 (MDARGGGGRP) the composition is skewed to gly residues. A disordered region spans residues 1-131 (MDARGGGGRP…AGPAGEPRGS (131 aa)). Residues 1–188 (MDARGGGGRP…PYSDFRFYWD (188 aa)) are Cytoplasmic-facing. Positions 17 to 47 (TPAPGPPPPPPPPAPPQPQPPPAPPPNPTTP) are enriched in pro residues. The span at 106 to 128 (GAASGPSAAEEAGSEEAGPAGEP) shows a compositional bias: low complexity. Phosphoserine occurs at positions 119 and 134. The segment at 131–182 (SQASFLQRQFGALLQPGVNKFSLRMFGSQKAVEREQERVKSAGAWIIHPYSD) is involved in subunit assembly. Residues 189 to 209 (FTMLLFMVGNLIIIPVGITFF) form a helical membrane-spanning segment. The Extracellular portion of the chain corresponds to 210–213 (KDET). The chain crosses the membrane as a helical span at residues 214-234 (TAPWIVFNVVSDTFFLMDLVL). Topologically, residues 235-261 (NFRTGIVIEDNTEIILDPEKIKKKYLR) are cytoplasmic. The chain crosses the membrane as a helical span at residues 262 to 282 (TWFVVDFVSSIPVDYIFLIVE). The Extracellular portion of the chain corresponds to 283–290 (KGIDSEVY). The chain crosses the membrane as a helical; Voltage-sensor span at residues 291 to 311 (KTARALRIVRFTKILSLLRLL). Topologically, residues 312 to 342 (RLSRLIRYIHQWEEIFHMTYDLASAVMRICN) are cytoplasmic. A helical membrane pass occupies residues 343–363 (LISMMLLLCHWDGCLQFLVPM). Residues 364-386 (LQDFPSDCWVSINNMVNHSWSEL) are Extracellular-facing. Residue Asn-380 is glycosylated (N-linked (GlcNAc...) asparagine). Residues 387–408 (YSFALFKAMSHMLCIGYGRQAP) constitute an intramembrane region (pore-forming). Residues 409 to 413 (ESMTD) are Extracellular-facing. The chain crosses the membrane as a helical span at residues 414–434 (IWLTMLSMIVGATCYAMFIGH). Residues 435–863 (ATALIQSLDS…SARSRLSSNL (429 aa)) are Cytoplasmic-facing. 6 residues coordinate 3',5'-cyclic AMP: Gly-581, Glu-582, Cys-584, Arg-591, Thr-592, and Arg-632. Ser-641 is modified (phosphoserine; by PKG/PRKG2). The residue at position 726 (Ser-726) is a Phosphoserine. Arg-728 carries the omega-N-methylarginine modification. The segment at 730–863 (VRRAPPGPLP…SARSRLSSNL (134 aa)) is disordered. The span at 734–755 (PPGPLPPAASPGPPAASPPAAP) shows a compositional bias: pro residues. Phosphoserine occurs at positions 743, 750, and 757. Composition is skewed to low complexity over residues 756 to 765 (SSPRAPRTSP), 778 to 800 (PALP…PSLP), and 808 to 834 (PAAS…AAPS). 3 positions are modified to phosphoserine: Ser-840, Ser-842, and Ser-847.

The protein belongs to the potassium channel HCN family. Homotetramer. The channel is composed of a homo- or heterotetrameric complex of pore-forming subunits. Heterotetramer with HCN1. Forms an obligate 4:4 complex with accessory subunit PEX5L; regulates HCN2 cell-surface expression and cyclic nucleotide dependence. Interacts with KCNE2. Post-translationally, S-palmitoylated. In terms of processing, N-glycosylated; required for cell surface trafficking of HCN2. Phosphorylation at Ser-641 by PRKG2 shifts the voltage-dependence to more negative voltages, hence counteracting the stimulatory effect of cGMP on gating. As to expression, highly expressed in brain. Detected at low levels in heart, in ventricle, atrium and in sinoatrial node (SAN).

It is found in the cell membrane. The catalysed reaction is Na(+)(in) = Na(+)(out). The enzyme catalyses K(+)(in) = K(+)(out). It catalyses the reaction NH4(+)(in) = NH4(+)(out). Activated by cAMP, and at 10-100 times higher concentrations, also by cGMP. cAMP binding causes a conformation change that leads to the assembly of an active tetramer and channel opening. In the absence of cAMP, the C-terminal region is thought to exert a tonic inhibition on the pore when HCN2 is in a non-tetrameric form. Channel activity is modulated by intracellular chloride ions and pH; acidic pH shifts the activation to more negative voltages. Phosphatidylinositol-4,5- bisphosphate (PIP(2)) acts as a ligand that allosterically opens HCN2 by shifting voltage-dependent channel activation toward depolarized potentials. Inhibited by extracellular cesium ions. Functionally, hyperpolarization-activated ion channel exhibiting weak selectivity for potassium over sodium ions. Contributes to the native pacemaker currents in heart (If) and in neurons (Ih). Can also transport ammonium in the distal nephron. Involved in the initiation of neuropathic pain in sensory neurons. This is Potassium/sodium hyperpolarization-activated cyclic nucleotide-gated channel 2 from Mus musculus (Mouse).